Reading from the N-terminus, the 131-residue chain is Peptide methionine sulfoxide reductase MsrB (131 aa).

The region spanning 8–130 (LEEWRAMLDP…NSVCLDLKPR (123 aa)) is the MsrB domain. C47, C50, C96, and C99 together coordinate Zn(2+). The Nucleophile role is filled by C119.

It belongs to the MsrB Met sulfoxide reductase family. Zn(2+) serves as cofactor.

It catalyses the reaction L-methionyl-[protein] + [thioredoxin]-disulfide + H2O = L-methionyl-(R)-S-oxide-[protein] + [thioredoxin]-dithiol. This is Peptide methionine sulfoxide reductase MsrB from Pseudomonas entomophila (strain L48).